Here is a 345-residue protein sequence, read N- to C-terminus: L-threonine 3-dehydrogenase (345 aa).

Zn(2+) is bound at residue C42. Active-site charge relay system residues include T44 and H47. Positions 67, 68, 97, 100, 103, and 111 each coordinate Zn(2+). Residues I179, D199, R204, 266-268, and 290-291 contribute to the NAD(+) site; these read LGI and IY.

It belongs to the zinc-containing alcohol dehydrogenase family. In terms of assembly, homotetramer. Zn(2+) is required as a cofactor.

Its subcellular location is the cytoplasm. The catalysed reaction is L-threonine + NAD(+) = (2S)-2-amino-3-oxobutanoate + NADH + H(+). It participates in amino-acid degradation; L-threonine degradation via oxydo-reductase pathway; glycine from L-threonine: step 1/2. Functionally, catalyzes the NAD(+)-dependent oxidation of L-threonine to 2-amino-3-ketobutyrate. This is L-threonine 3-dehydrogenase from Rhizobium rhizogenes (strain K84 / ATCC BAA-868) (Agrobacterium radiobacter).